Reading from the N-terminus, the 409-residue chain is DEP domain-containing mTOR-interacting protein (409 aa).

Met-1 is modified (N-acetylmethionine). Residues Met-1 to Gly-10 are compositionally biased toward gly residues. Residues Met-1 to Gln-23 are disordered. DEP domains follow at residues Thr-36–Lys-119 and Pro-146–Met-219. The DDEX motif signature appears at Phe-217–Ser-235. Ser-235 carries the post-translational modification Phosphoserine. Position 241 is a phosphothreonine (Thr-241). Phosphoserine occurs at positions 244 and 258. Thr-259 carries the phosphothreonine modification. Residues Ser-263, Ser-265, Ser-280, Ser-282, Ser-283, Ser-286, and Ser-287 each carry the phosphoserine modification. The short motif at Ser-286–Ser-291 is the BetaTrCP degron motif element. The residue at position 289 (Tyr-289) is a Phosphotyrosine. 2 positions are modified to phosphoserine: Ser-291 and Ser-293. Thr-295 carries the phosphothreonine modification. A phosphoserine mark is found at Ser-297, Ser-298, and Ser-299. The PDZ domain occupies Thr-330–Leu-407.

Associated component of the mechanistic target of rapamycin complex 1 (mTORC1) which contains MTOR, MLST8 and RPTOR. Associated component of the mechanistic target of rapamycin complex 2 (mTORC2) which contains MTOR, MLST8, PROTOR1, RICTOR, MAPKAP1 and DEPTOR. Interacts (via PDZ domain) with MTOR; interacts with MTOR within both mTORC1 and mTORC2. Interacts (via PDZ domain) with MINAR1 (via N-terminus). Interacts with SIK3. In terms of processing, phosphorylation weakens interaction with MTOR within mTORC1 and mTORC2. Phosphorylated at Ser-286, Ser-287 and Ser-291 in response to mitogenic stimulation by MTOR: DEPTOR is either directly phosphorylated by MTOR or indirectly via proteins kinases that are activated by MTOR, such as CK1/CSNK1A1. Phosphorylation at Ser-286, Ser-287 and Ser-291 promotes ubiquitination by the SCF(BTRC) complex, followed by degradation. Phosphorylation at Ser-235 by MAPK3/ERK1 promotes deubiquitination by USP7, enhancing its stability. Phosphorylation at Tyr-291 by SYK impairs its interaction with MTOR, promoting mTORC1 and mTORC2 signaling. Post-translationally, ubiquitinated; leading to proteasomal degradation. Ubiquitination by the SCF(BTRC) and SCF(FBXW11) complexes following phosphorylation at Ser-286, Ser-287 and Ser-291 by MTOR, leads to its degradation by the proteasome. Deubiquitinated by OTUB1 in response to amino acid via a non-canonical mechanism, leading to DEPTOR stability. Deubiquitinated by USP7 following phosphorylation at Ser-235, promoting its stability.

It is found in the lysosome membrane. Inhibited upon phosphatidic acid-binding: phosphatidic acid produced upon mitogenic stimulation promotes DEPTOR dissociatiom from the mTORC1 and mTORC2 complexes, leading to their activation. Specifically binds unsaturated phosphatidic acid, such as 16:0-18:1, 18:0-18:1 and di-18:1. Inhibited when nutrients are present via a feedback loop: phosphorylation by MTOR promotes DEPTOR ubiquitination and degradation. Functionally, negative regulator of the mTORC1 and mTORC2 complexes: inhibits the protein kinase activity of MTOR, thereby inactivating both complexes. DEPTOR inhibits mTORC1 and mTORC2 to induce autophagy. In contrast to AKT1S1/PRAS40, only partially inhibits mTORC1 activity. In Mus musculus (Mouse), this protein is DEP domain-containing mTOR-interacting protein.